The primary structure comprises 738 residues: DNA ligase (738 aa).

Residues 48–52 (DVVYD), 97–98 (SL), and glutamate 136 each bind NAD(+). Catalysis depends on lysine 138, which acts as the N6-AMP-lysine intermediate. The NAD(+) site is built by arginine 159, glutamate 196, lysine 356, and lysine 380. 4 residues coordinate Zn(2+): cysteine 474, cysteine 477, cysteine 492, and cysteine 497. A BRCT domain is found at 659-738 (QLPQPLAGKT…SQLLELLEET (80 aa)).

It belongs to the NAD-dependent DNA ligase family. LigA subfamily. It depends on Mg(2+) as a cofactor. Mn(2+) is required as a cofactor.

The enzyme catalyses NAD(+) + (deoxyribonucleotide)n-3'-hydroxyl + 5'-phospho-(deoxyribonucleotide)m = (deoxyribonucleotide)n+m + AMP + beta-nicotinamide D-nucleotide.. In terms of biological role, DNA ligase that catalyzes the formation of phosphodiester linkages between 5'-phosphoryl and 3'-hydroxyl groups in double-stranded DNA using NAD as a coenzyme and as the energy source for the reaction. It is essential for DNA replication and repair of damaged DNA. In Cyanothece sp. (strain PCC 7425 / ATCC 29141), this protein is DNA ligase.